A 175-amino-acid polypeptide reads, in one-letter code: CDP-archaeol synthase (175 aa).

Helical transmembrane passes span 41 to 61, 78 to 98, 122 to 142, and 150 to 170; these read GLFS…WLSM, YASA…GDMF, FVVG…VSNF, and VLIM…FIGV.

The protein belongs to the CDP-archaeol synthase family. Mg(2+) is required as a cofactor.

The protein localises to the cell membrane. The enzyme catalyses 2,3-bis-O-(geranylgeranyl)-sn-glycerol 1-phosphate + CTP + H(+) = CDP-2,3-bis-O-(geranylgeranyl)-sn-glycerol + diphosphate. It functions in the pathway membrane lipid metabolism; glycerophospholipid metabolism. Its function is as follows. Catalyzes the formation of CDP-2,3-bis-(O-geranylgeranyl)-sn-glycerol (CDP-archaeol) from 2,3-bis-(O-geranylgeranyl)-sn-glycerol 1-phosphate (DGGGP) and CTP. This reaction is the third ether-bond-formation step in the biosynthesis of archaeal membrane lipids. The polypeptide is CDP-archaeol synthase (Methanosarcina acetivorans (strain ATCC 35395 / DSM 2834 / JCM 12185 / C2A)).